A 107-amino-acid chain; its full sequence is Iron-binding protein IscA (107 aa).

Residues cysteine 35, cysteine 99, and cysteine 101 each contribute to the Fe cation site.

It belongs to the HesB/IscA family. As to quaternary structure, homodimer; may form tetramers and higher multimers. It depends on Fe cation as a cofactor.

Is able to transfer iron-sulfur clusters to apo-ferredoxin. Multiple cycles of [2Fe2S] cluster formation and transfer are observed, suggesting that IscA acts catalytically. Recruits intracellular free iron so as to provide iron for the assembly of transient iron-sulfur cluster in IscU in the presence of IscS, L-cysteine and the thioredoxin reductase system TrxA/TrxB. This is Iron-binding protein IscA from Yersinia enterocolitica serotype O:8 / biotype 1B (strain NCTC 13174 / 8081).